Reading from the N-terminus, the 1172-residue chain is Serine/threonine-protein kinase Nek10 (1172 aa).

The ARM repeat unit spans residues 209–251 (GAHKTLVNLLGARDTNVLLGSLLALASLAESQECREKISELNI). The stretch at 481 to 514 (YEELVSKLNLLVEDELKQIAENIESINQNKAPLK) forms a coiled coil. The Protein kinase domain occupies 519-712 (YAILDHLGSG…SEPYGEKADV (194 aa)). Residues 525 to 533 (LGSGAFGCV) and Lys-548 contribute to the ATP site. The active-site Proton acceptor is the Asp-655. 2 disordered regions span residues 855–875 (SELSESADLPPEGFQASYGKD) and 898–954 (TYSE…GSRP). Over residues 919–945 (PLKESTFNILKRSFSASGGERQSQTRD) the composition is skewed to polar residues.

The protein belongs to the protein kinase superfamily. NEK Ser/Thr protein kinase family. NIMA subfamily. In terms of assembly, interacts with RAF1 and MAP2K1; the interaction is direct with RAF1 and required for ERK1/2-signaling pathway activation in response to UV irradiation. The cofactor is Mg(2+). As to expression, expressed in the lung.

It catalyses the reaction L-seryl-[protein] + ATP = O-phospho-L-seryl-[protein] + ADP + H(+). It carries out the reaction L-threonyl-[protein] + ATP = O-phospho-L-threonyl-[protein] + ADP + H(+). Its function is as follows. Plays a role in the cellular response to UV irradiation. Mediates G2/M cell cycle arrest, MEK autoactivation and ERK1/2-signaling pathway activation in response to UV irradiation. In ciliated cells of airways, it is involved in the regulation of mucociliary transport. The chain is Serine/threonine-protein kinase Nek10 from Homo sapiens (Human).